Here is a 226-residue protein sequence, read N- to C-terminus: MSTLGLLIMLLGIIIMCTLVILRSVNPIYSILNLIVIYGCYASILLTVEMEFLACIYILVNVGAIAVLFLFIVMMININIVEIQETMKKYNIYMIVGIIGVVGLLGILITNYQIRIKEEVIADFSMFLINSEVVQLQATPSYLDFYSLFVETTDIRTMGSNVIYGSYSIWFIMACIILLIGMVGVIYITEDLIIEKRTLNERRRQDINSQVLREYKITIRNYRESK.

Transmembrane regions (helical) follow at residues 2–22 (STLG…LVIL), 28–48 (IYSI…LLTV), 56–76 (IYIL…VMMI), 90–110 (YNIY…ILIT), and 169–189 (IWFI…IYIT).

It belongs to the complex I subunit 6 family.

The protein resides in the mitochondrion membrane. The catalysed reaction is a ubiquinone + NADH + 5 H(+)(in) = a ubiquinol + NAD(+) + 4 H(+)(out). Core subunit of the mitochondrial membrane respiratory chain NADH dehydrogenase (Complex I) that is believed to belong to the minimal assembly required for catalysis. Complex I functions in the transfer of electrons from NADH to the respiratory chain. The immediate electron acceptor for the enzyme is believed to be ubiquinone. The polypeptide is NADH-ubiquinone oxidoreductase chain 6 (nad6) (Dictyostelium discoideum (Social amoeba)).